The primary structure comprises 260 residues: Mediator of RNA polymerase II transcription subunit 8 (260 aa).

The protein belongs to the Mediator complex subunit 8 family. In terms of assembly, component of the Mediator complex.

It is found in the nucleus. Its function is as follows. Component of the Mediator complex, a coactivator involved in the regulated transcription of nearly all RNA polymerase II-dependent genes. Mediator functions as a bridge to convey information from gene-specific regulatory proteins to the basal RNA polymerase II transcription machinery. Mediator is recruited to promoters by direct interactions with regulatory proteins and serves as a scaffold for the assembly of a functional preinitiation complex with RNA polymerase II and the general transcription factors. This Emericella nidulans (strain FGSC A4 / ATCC 38163 / CBS 112.46 / NRRL 194 / M139) (Aspergillus nidulans) protein is Mediator of RNA polymerase II transcription subunit 8 (med8).